The sequence spans 119 residues: Large ribosomal subunit protein eL31y (119 aa).

It belongs to the eukaryotic ribosomal protein eL31 family.

The polypeptide is Large ribosomal subunit protein eL31y (RPL31B) (Arabidopsis thaliana (Mouse-ear cress)).